Reading from the N-terminus, the 450-residue chain is Phosphoglucosamine mutase 2 (450 aa).

Catalysis depends on serine 101, which acts as the Phosphoserine intermediate. Mg(2+)-binding residues include serine 101, aspartate 245, aspartate 247, and aspartate 249. Serine 101 carries the post-translational modification Phosphoserine.

The protein belongs to the phosphohexose mutase family. Requires Mg(2+) as cofactor. Post-translationally, activated by phosphorylation.

The enzyme catalyses alpha-D-glucosamine 1-phosphate = D-glucosamine 6-phosphate. Its function is as follows. Catalyzes the conversion of glucosamine-6-phosphate to glucosamine-1-phosphate. The sequence is that of Phosphoglucosamine mutase 2 from Shewanella sp. (strain MR-7).